Consider the following 202-residue polypeptide: MRVVLASRNEAKLTELRRILAASGLSVELVALPDGEEVAETGTTFAENALIKARAAADQTGLPAVADDSGLAVDELSGMPGVRSARWSGRRDGTRVERDEANNALLLAQLDDVPPERRGAAFVCAAALVTPAGVERVTHGELRGVLLTEPRGQAGFGYDPLFLADGQTRTNAELTAAEKDAISHRGLAFRDLATLLREVLTS.

7–12 (SRNEAK) provides a ligand contact to substrate. The active-site Proton acceptor is aspartate 68. Aspartate 68 contributes to the Mg(2+) binding site. Residues serine 69, 156–159 (FGYD), lysine 179, and 184–185 (HR) each bind substrate.

Belongs to the HAM1 NTPase family. As to quaternary structure, homodimer. The cofactor is Mg(2+).

The enzyme catalyses XTP + H2O = XMP + diphosphate + H(+). The catalysed reaction is dITP + H2O = dIMP + diphosphate + H(+). It carries out the reaction ITP + H2O = IMP + diphosphate + H(+). In terms of biological role, pyrophosphatase that catalyzes the hydrolysis of nucleoside triphosphates to their monophosphate derivatives, with a high preference for the non-canonical purine nucleotides XTP (xanthosine triphosphate), dITP (deoxyinosine triphosphate) and ITP. Seems to function as a house-cleaning enzyme that removes non-canonical purine nucleotides from the nucleotide pool, thus preventing their incorporation into DNA/RNA and avoiding chromosomal lesions. In Frankia alni (strain DSM 45986 / CECT 9034 / ACN14a), this protein is dITP/XTP pyrophosphatase.